The primary structure comprises 121 residues: SPbeta prophage-derived uncharacterized protein YorW (121 aa).

In Bacillus subtilis (strain 168), this protein is SPbeta prophage-derived uncharacterized protein YorW (yorW).